The following is a 140-amino-acid chain: MTYRLPFVAVILFVTAKHVVLALENANWIEASKTVPSDSTQTTRVAYRRITGGFNERFLRQLEKKPGVNDKRDEERANFFEAVFKNTLFNAFGYRSDAKAKLQDPNSNIFVNLLRRIFVWWAKNKPEFNKNADMHKEAMV.

A signal peptide spans 1-22 (MTYRLPFVAVILFVTAKHVVLA). The short motif at 57 to 76 (RFLRQLEKKPGVNDKRDEER) is the RxLR-dEER element.

Belongs to the RxLR effector family.

It is found in the secreted. It localises to the host nucleus. The protein localises to the host cytoplasm. Its function is as follows. Secreted effector that completely suppresses the host cell death induced by cell death-inducing proteins. This chain is Secreted RxLR effector protein 37, found in Plasmopara viticola (Downy mildew of grapevine).